The sequence spans 421 residues: Magnesium transporter MRS2-5 (421 aa).

2 helical membrane passes run 357 to 377 (LLLTAATFVAAIFAAVTAVFG) and 393 to 413 (YVLLITGIGCGFLYFGFVLYF). The short motif at 377–379 (GMN) is the Required for magnesium transport activity element.

Belongs to the CorA metal ion transporter (MIT) (TC 1.A.35.5) family. In terms of tissue distribution, expressed in the whole plant.

The protein localises to the membrane. In terms of biological role, magnesium transporter that may mediate the influx of magnesium. This is Magnesium transporter MRS2-5 (MRS2-5) from Arabidopsis thaliana (Mouse-ear cress).